We begin with the raw amino-acid sequence, 226 residues long: Urease accessory protein UreF (226 aa).

Belongs to the UreF family. UreD, UreF and UreG form a complex that acts as a GTP-hydrolysis-dependent molecular chaperone, activating the urease apoprotein by helping to assemble the nickel containing metallocenter of UreC. The UreE protein probably delivers the nickel.

The protein localises to the cytoplasm. Its function is as follows. Required for maturation of urease via the functional incorporation of the urease nickel metallocenter. In Burkholderia cenocepacia (strain HI2424), this protein is Urease accessory protein UreF.